The sequence spans 96 residues: Large ribosomal subunit protein eL14 (96 aa).

It belongs to the eukaryotic ribosomal protein eL14 family.

The protein is Large ribosomal subunit protein eL14 of Staphylothermus marinus (strain ATCC 43588 / DSM 3639 / JCM 9404 / F1).